A 345-amino-acid polypeptide reads, in one-letter code: MAGLFYLGGRDHNKQDHHQEKDHNEDKSNNYLYLYKDEIYNNNKGFEIFPPQYFQQQQQQNHAAAPTNLYSFGMVPSGGNINNNRSTNRSLYFNVVSDHEPVRSSTGGFTVTRQGNMNCQDCGNQAKKDCPHMRCRTCCKSRGFDCQTHVKSTWVSAAKRRERQAQLAVLPAKRIRDANSRGGGDDDDDDKEDEKNDSCGGGSALACTRVVNASSSGLETSHLPPEISSPAVFRCMRVSSIDDEDEEYAYQTAVSIGGHVFKGILYDQGPSSDHHRYSSSLNGETSHQHHLNLMDSTPSAATTNAVTAVNTNNGSIDPSSLYTAVATPFNAFVAGGTPFFASSRC.

A disordered region spans residues 7 to 28; it reads LGGRDHNKQDHHQEKDHNEDKS. Residues 9-28 are compositionally biased toward basic and acidic residues; it reads GRDHNKQDHHQEKDHNEDKS. Zn(2+) contacts are provided by C119, C122, C130, C135, C139, and C146. The zn(2)-C6 fungal-type; degenerate DNA-binding region spans 119–146; sequence CQDCGNQAKKDCPHMRCRTCCKSRGFDC. Residues 168 to 200 are disordered; that stretch reads AVLPAKRIRDANSRGGGDDDDDDKEDEKNDSCG. Residues 256–259 carry the Required for homo- and heterodimerization motif; the sequence is IGGH.

Belongs to the SHI protein family. As to expression, mainly expressed in the filaments of flowers, the shoot apex regions and pollen. Also present in leaves.

The protein localises to the nucleus. Functionally, transcription activator that binds DNA on 5'-ACTCTAC-3' and promotes auxin homeostasis-regulating gene expression (e.g. YUC genes), as well as genes affecting stamen development, cell expansion and timing of flowering. Synergistically with other SHI-related proteins, regulates gynoecium, stamen and leaf development in a dose-dependent manner, controlling apical-basal patterning. Promotes style and stigma formation, and influences vascular development during gynoecium development. May also have a role in the formation and/or maintenance of the shoot apical meristem (SAM). Regulates anther dehiscence and floral development. In Arabidopsis thaliana (Mouse-ear cress), this protein is Protein SHI RELATED SEQUENCE 7 (SRS7).